We begin with the raw amino-acid sequence, 82 residues long: uncharacterized protein (82 aa).

The 2Fe-2S ferredoxin-type domain occupies 1–82; that stretch reads MKIHLIRHNT…HVESDIEIDL (82 aa). [2Fe-2S] cluster is bound by residues Cys-35, Cys-40, Cys-43, and Cys-72.

It depends on [2Fe-2S] cluster as a cofactor.

This is an uncharacterized protein from Haemophilus influenzae (strain ATCC 51907 / DSM 11121 / KW20 / Rd).